Reading from the N-terminus, the 353-residue chain is Phosphoribosylformylglycinamidine cyclo-ligase (353 aa).

This sequence belongs to the AIR synthase family.

Its subcellular location is the cytoplasm. The enzyme catalyses 2-formamido-N(1)-(5-O-phospho-beta-D-ribosyl)acetamidine + ATP = 5-amino-1-(5-phospho-beta-D-ribosyl)imidazole + ADP + phosphate + H(+). It participates in purine metabolism; IMP biosynthesis via de novo pathway; 5-amino-1-(5-phospho-D-ribosyl)imidazole from N(2)-formyl-N(1)-(5-phospho-D-ribosyl)glycinamide: step 2/2. The sequence is that of Phosphoribosylformylglycinamidine cyclo-ligase from Ralstonia nicotianae (strain ATCC BAA-1114 / GMI1000) (Ralstonia solanacearum).